Reading from the N-terminus, the 292-residue chain is 33 kDa chaperonin (292 aa).

2 cysteine pairs are disulfide-bonded: Cys-230/Cys-232 and Cys-263/Cys-266.

It belongs to the HSP33 family. Under oxidizing conditions two disulfide bonds are formed involving the reactive cysteines. Under reducing conditions zinc is bound to the reactive cysteines and the protein is inactive.

The protein localises to the cytoplasm. Redox regulated molecular chaperone. Protects both thermally unfolding and oxidatively damaged proteins from irreversible aggregation. Plays an important role in the bacterial defense system toward oxidative stress. This Escherichia coli O17:K52:H18 (strain UMN026 / ExPEC) protein is 33 kDa chaperonin.